The sequence spans 184 residues: NADH-quinone oxidoreductase subunit B (184 aa).

Positions 63, 64, 128, and 158 each coordinate [4Fe-4S] cluster.

This sequence belongs to the complex I 20 kDa subunit family. In terms of assembly, NDH-1 is composed of 14 different subunits. Subunits NuoB, C, D, E, F, and G constitute the peripheral sector of the complex. Requires [4Fe-4S] cluster as cofactor.

Its subcellular location is the cell inner membrane. It catalyses the reaction a quinone + NADH + 5 H(+)(in) = a quinol + NAD(+) + 4 H(+)(out). In terms of biological role, NDH-1 shuttles electrons from NADH, via FMN and iron-sulfur (Fe-S) centers, to quinones in the respiratory chain. Couples the redox reaction to proton translocation (for every two electrons transferred, four hydrogen ions are translocated across the cytoplasmic membrane), and thus conserves the redox energy in a proton gradient. The polypeptide is NADH-quinone oxidoreductase subunit B (Stenotrophomonas maltophilia (strain R551-3)).